The following is an 873-amino-acid chain: Zinc fingers and homeoboxes protein 1 (873 aa).

Residues 24 to 63 form a disordered region; the sequence is LISDLDEGPPVLTPVENTRAESISSDEEVHESVDSDNQQN. Residue T36 is modified to Phosphothreonine. Phosphoserine occurs at positions 45, 47, and 48. 2 C2H2-type zinc fingers span residues 70–93 and 102–125; these read YECK…DSEH and YVCV…LKYH. K159 participates in a covalent cross-link: Glycyl lysine isopeptide (Lys-Gly) (interchain with G-Cter in SUMO2). The interval 200–236 is disordered; that stretch reads HNSVEDVPEEKENEIKPDREEIVENPSSSASESNTST. At S202 the chain carries Phosphoserine. The segment covering 212-221 has biased composition (basic and acidic residues); that stretch reads NEIKPDREEI. Positions 223-236 are enriched in low complexity; it reads ENPSSSASESNTST. The required for dimerization stretch occupies residues 272 to 432; sequence NSNLIPKVLI…QNNIQKSQVP (161 aa). Residues 272–564 form a required for interaction with NFYA region; the sequence is NSNLIPKVLI…AQPKQSWNPF (293 aa). The homeobox 1 DNA-binding region spans 284 to 346; that stretch reads NSIPTYNAAL…LKHGVSWTPE (63 aa). Residues K441, K454, K485, and K629 each participate in a glycyl lysine isopeptide (Lys-Gly) (interchain with G-Cter in SUMO2) cross-link. 2 consecutive DNA-binding regions (homeobox) follow at residues 464–526 and 569–630; these read SFGI…KSNQ and PQKF…EEKM. 2 disordered regions span residues 626–667 and 732–769; these read KEEK…ICKK and SSMN…INNW. S648 bears the Phosphoserine mark. Positions 660-722 form a DNA-binding region, homeobox 4; the sequence is STGKICKKTP…YAWKNGNLKW (63 aa). The interval 734 to 768 is required for nuclear localization; sequence MNGLSSLRKRGRGRPKGRGRGRPRGRPRGSKRINN. Basic residues predominate over residues 740–764; sequence LRKRGRGRPKGRGRGRPRGRPRGSK. The residue at position 774 (S774) is a Phosphoserine. Residues 777–832 constitute a DNA-binding region (homeobox 5); the sequence is KFKTGTAILKDYYLKHKFLNEQDLDELVNKSHMGYEQVREWFAERQRRSELGIELF. The tract at residues 829–873 is disordered; the sequence is IELFEENEEEDEVIDDQEEDEEETDDSDTWEPPRHVKRKLSKSDD. Residues 831 to 857 show a composition bias toward acidic residues; the sequence is LFEENEEEDEVIDDQEEDEEETDDSDT. The required for repressor activity stretch occupies residues 831 to 873; that stretch reads LFEENEEEDEVIDDQEEDEEETDDSDTWEPPRHVKRKLSKSDD. A compositionally biased stretch (basic residues) spans 863-873; the sequence is HVKRKLSKSDD.

This sequence belongs to the ZHX family. As to quaternary structure, forms homodimers. Heterodimer (via HD1 domain) with ZHX2 (via HD1 domain). Also forms a heterodimer with ZHX3 which is a prerequisite for repressor activity. Interacts with ATF7IP and NFYA. Interacts (via homeobox domains) with DNMT3B (via PWWP domain).

The protein resides in the nucleus. Functionally, acts as a transcriptional repressor. Increases DNMT3B-mediated repressive transcriptional activity when DNMT3B is tethered to DNA. May link molecule between DNMT3B and other co-repressor proteins. The polypeptide is Zinc fingers and homeoboxes protein 1 (ZHX1) (Pan troglodytes (Chimpanzee)).